A 229-amino-acid polypeptide reads, in one-letter code: Small ribosomal subunit protein mS23 (229 aa).

The protein belongs to the mitochondrion-specific ribosomal protein mS23 family. In terms of assembly, component of the mitochondrial small ribosomal subunit.

It localises to the mitochondrion. The sequence is that of Small ribosomal subunit protein mS23 (RSM25) from Yarrowia lipolytica (strain CLIB 122 / E 150) (Yeast).